A 397-amino-acid chain; its full sequence is Glycine betaine/carnitine transport ATP-binding protein GbuA (397 aa).

An ABC transporter domain is found at 28 to 264 (KSKTDILKET…PANEYVEKFI (237 aa)). Residue 60-67 (GLSGSGKS) coordinates ATP. 2 consecutive CBS domains span residues 279–335 (MIRP…NITS) and 340–395 (LHRD…EVNV).

The protein belongs to the ABC transporter superfamily. The complex is composed of two ATP-binding proteins (GbuA), two transmembrane proteins (GbuB) and a solute-binding protein (GbuC).

It carries out the reaction a quaternary ammonium(out) + ATP + H2O = a quaternary ammonium(in) + ADP + phosphate + H(+). Its activity is regulated as follows. The complex is activated by an osmotic gradient or by low temperature. Functionally, part of the ABC transporter complex GbuABC involved in glycine betaine uptake. Responsible for energy coupling to the transport system. Involved, with BetL and OpuC, in osmoprotection and cryoprotection of Listeria. Can also uptake carnitine when carnitine is abundant in the growth medium. The chain is Glycine betaine/carnitine transport ATP-binding protein GbuA (gbuA) from Listeria monocytogenes serotype 1/2a (strain 10403S).